The chain runs to 473 residues: SHC-transforming protein 1 (473 aa).

Residues 1–26 (MNKLSGGGGRRTRVEGGQLGGEEWTR) are disordered. A Phosphoserine modification is found at S29. An N6-acetyllysine modification is found at K44. In terms of domain architecture, PID spans 46-229 (MGPGVSYLVR…AGFDGSAWDE (184 aa)). The interval 216 to 314 (HDRMAGFDGS…PSSGRELFDD (99 aa)) is disordered. The CH1 stretch occupies residues 230-377 (EEEEPPDHQY…AMAEQLRGEP (148 aa)). Residues Y239, Y240, and Y317 each carry the phosphotyrosine modification. The segment at 328-348 (QAGAGAGPPNPTINGSAPRDL) is disordered. S343 carries the phosphoserine modification. Residues 378 to 469 (WFHGKLSRRE…GSELCLQQPV (92 aa)) enclose the SH2 domain.

In terms of assembly, interacts with CPNE3; this interaction may mediate the binding of CPNE3 with ERBB2. Interacts with the Trk receptors NTRK1, NTRK2 and NTRK3; in a phosphotyrosine-dependent manner. Interacts with the NPXY motif of tyrosine-phosphorylated IGF1R and INSR in vitro via the PID domain. Once activated, binds to GRB2. Interacts with tyrosine-phosphorylated CD3T and DDR2. Interacts with the N-terminal region of APS. Interacts with phosphorylated LRP1 and IRS4. Interacts with INPP5D/SHIP1 and INPPL1/SHIP2. Interacts with ALK, GAB2, GRB7 and KIT. Interacts with PTPN6/SHP (tyrosine phosphorylated). Identified in a complex containing FGFR4, NCAM1, CDH2, PLCG1, FRS2, SRC, SHC1, GAP43 and CTTN. Interacts with FLT4 (tyrosine-phosphorylated). Interacts with EPHB1 and GRB2; activates the MAPK/ERK cascade to regulate cell migration. Interacts with PDGFRB (tyrosine-phosphorylated). Interacts with ERBB4. Interacts with TEK/TIE2 (tyrosine-phosphorylated). Interacts with PTK2/FAK1. Interacts with CEACAM1; this interaction is CEACAM1-phosphorylation-dependent and mediates interaction with EGFR or INSR resulting in decrease coupling of SHC1 to the MAPK3/ERK1-MAPK1/ERK2 pathway. Interacts (via PID domain) with PEAK1 (when phosphorylated). Found in a complex with PPP1CA, PPP1CC, SHC1 and PEAK1. In terms of processing, phosphorylated by activated epidermal growth factor receptor. Phosphorylated in response to KIT signaling. Tyrosine phosphorylated in response to FLT3 and FLT4 signaling and by ligand-activated ALK. Tyrosine phosphorylated by ligand-activated PDGFRB. Tyrosine phosphorylated by TEK/TIE2. May be tyrosine phosphorylated by activated PTK2/FAK1. Tyrosine phosphorylated by activated PTK2B/PYK2. Dephosphorylation by PTPN2 may regulate interaction with GRB2.

It localises to the cytoplasm. Its subcellular location is the cell junction. The protein localises to the focal adhesion. Its function is as follows. Signaling adapter that couples activated growth factor receptors to signaling pathways. Participates in a signaling cascade initiated by activated KIT and KITLG/SCF. Participates in signaling downstream of the angiopoietin receptor TEK/TIE2, and plays a role in the regulation of endothelial cell migration and sprouting angiogenesis. This Bos taurus (Bovine) protein is SHC-transforming protein 1 (SHC1).